The chain runs to 26 residues: Guentherin (26 aa).

As to expression, expressed by the skin glands.

The protein localises to the secreted. Antimicrobial peptide. Active against the Gram-positive bacteria S.aureus FDA209P (MIC=35.5 ug/ml) and B.subtilis ATCC 6633 (MIC&gt;64 ug/ml), but not active against the Gram-negative bacterium E.coli or the fungus C.albicans. This chain is Guentherin, found in Sylvirana guentheri (Gunther's frog).